Consider the following 87-residue polypeptide: Small ribosomal subunit protein bS20 (87 aa).

Residues 1–22 (MANSAGSKKRARQAVKSRAHNG) form a disordered region. Residues 7 to 19 (SKKRARQAVKSRA) show a composition bias toward basic residues.

It belongs to the bacterial ribosomal protein bS20 family.

Its function is as follows. Binds directly to 16S ribosomal RNA. The polypeptide is Small ribosomal subunit protein bS20 (Marinomonas sp. (strain MWYL1)).